The chain runs to 274 residues: NADPH-dependent 7-cyano-7-deazaguanine reductase (274 aa).

80 to 82 lines the substrate pocket; sequence VES. Residue 82-83 coordinates NADPH; sequence SK. The Thioimide intermediate role is filled by Cys181. Asp188 serves as the catalytic Proton donor. 220–221 contacts substrate; it reads HE. Residue 249-250 coordinates NADPH; the sequence is RG.

This sequence belongs to the GTP cyclohydrolase I family. QueF type 2 subfamily. Homodimer.

Its subcellular location is the cytoplasm. It carries out the reaction 7-aminomethyl-7-carbaguanine + 2 NADP(+) = 7-cyano-7-deazaguanine + 2 NADPH + 3 H(+). Its pathway is tRNA modification; tRNA-queuosine biosynthesis. Its function is as follows. Catalyzes the NADPH-dependent reduction of 7-cyano-7-deazaguanine (preQ0) to 7-aminomethyl-7-deazaguanine (preQ1). The protein is NADPH-dependent 7-cyano-7-deazaguanine reductase of Burkholderia pseudomallei (strain 1106a).